Here is a 318-residue protein sequence, read N- to C-terminus: Protease HtpX homolog (318 aa).

2 helical membrane-spanning segments follow: residues 6–26 (TAML…LIGG) and 28–48 (AGMM…YWNS). A Zn(2+)-binding site is contributed by H130. E131 is a catalytic residue. H134 lines the Zn(2+) pocket. 2 helical membrane-spanning segments follow: residues 145–165 (ITAT…FFGG) and 173–193 (PLGF…AMLV). Position 202 (E202) interacts with Zn(2+). The segment at 284-318 (NVSTGPVRAVNPTRKSRSVPNTGRGGSQPPRGPWS) is disordered.

It belongs to the peptidase M48B family. Zn(2+) serves as cofactor.

The protein localises to the cell inner membrane. In Rhizobium etli (strain CIAT 652), this protein is Protease HtpX homolog.